Here is a 487-residue protein sequence, read N- to C-terminus: Iron-sulfur cluster assembly SufBD family protein ycf24 (487 aa).

It belongs to the iron-sulfur cluster assembly SufBD family.

The protein resides in the plastid. Its subcellular location is the chloroplast. In Pyropia yezoensis (Susabi-nori), this protein is Iron-sulfur cluster assembly SufBD family protein ycf24 (ycf24).